The chain runs to 160 residues: Triabin (160 aa).

An N-terminal signal peptide occupies residues 1 to 18 (MKTIIAVTIFGILTCAYA). 3 disulfide bridges follow: Cys-24–Cys-128, Cys-57–Cys-160, and Cys-87–Cys-102.

This sequence belongs to the calycin superfamily. Triabin family. As to expression, expressed in salivary glands.

The protein localises to the secreted. Functionally, thrombin inhibitor. Forms a non-covalent complex with thrombin at a molar ratio of 1:1. Inhibits thrombin-induced platelet aggregation. Prolongs thrombin clotting time and activated partial thromboplastin time. It only minimally suppresses the amidolytic activity of thrombin. Inhibits thrombin-mediated fibrin formation in the host. Inhibits thrombin-induced endothelium-dependent relaxant and contractile responses in host blood vessels. Inhibits thrombin-induced mitogenesis in host vascular smooth muscle cells. The chain is Triabin from Meccus pallidipennis (Triatomine bug).